Reading from the N-terminus, the 824-residue chain is 4-methylaminobutanoate oxidase (formaldehyde-forming) (824 aa).

His67 bears the Pros-8alpha-FAD histidine mark.

The protein belongs to the GcvT family. It depends on FAD as a cofactor.

It carries out the reaction 4-(methylamino)butanoate + O2 + H2O = 4-aminobutanoate + formaldehyde + H2O2. It participates in alkaloid degradation; nicotine degradation. In terms of biological role, catalyzes the oxidative demethylation of 4-methylaminobutanoate produced from the pyrrolidine ring of nicotine. To a much lesser extent, can also use sarcosine as substrate, but is not active against dimethylglycine, methylaminopropionitrile, methylaminopropylamine, and alpha-methylaminobutanoate. In Paenarthrobacter nicotinovorans (Arthrobacter nicotinovorans), this protein is 4-methylaminobutanoate oxidase (formaldehyde-forming) (abo).